The sequence spans 445 residues: Scarecrow-like protein 18 (445 aa).

A compositionally biased stretch (low complexity) spans 1–21 (MLTSFKSSSSSSEDATATTTE). Residues 1 to 26 (MLTSFKSSSSSSEDATATTTENPPPL) form a disordered region. Positions 32 to 445 (SAATSASHHL…RPLFSVSSWK (414 aa)) constitute a GRAS domain. The leucine repeat I (LRI) stretch occupies residues 39–127 (HHLRRLLFTA…STVFTSSVCK (89 aa)). The interval 146–217 (YLWLNQLTPF…SPPPSLRITG (72 aa)) is VHIID. The short motif at 179–183 (LHILD) is the VHIID element. The leucine repeat II (LRII) stretch occupies residues 227–259 (RTGDRLTRFADSLGLQFQFHTLVIVEEDLAGLL). The interval 275–366 (IAVNCVHFLH…QRWFGKEILD (92 aa)) is PFYRE. The SAW stretch occupies residues 369–445 (AAEETERKQR…RPLFSVSSWK (77 aa)).

Belongs to the GRAS family. As to expression, expressed in roots and flowers.

The protein resides in the nucleus. Its function is as follows. Probable transcription factor required for axillary (lateral) shoot meristem formation during vegetative development. Seems to act upstream of REVOLUTA. The polypeptide is Scarecrow-like protein 18 (SCL18) (Arabidopsis thaliana (Mouse-ear cress)).